Consider the following 433-residue polypeptide: Eukaryotic translation initiation factor 3 subunit E (433 aa).

The 174-residue stretch at 217–390 folds into the PCI domain; sequence FFNHGKGRDL…GHVVMGTQPL (174 aa).

The protein belongs to the eIF-3 subunit E family. Component of the eukaryotic translation initiation factor 3 (eIF-3) complex.

It is found in the cytoplasm. Component of the eukaryotic translation initiation factor 3 (eIF-3) complex, which is involved in protein synthesis of a specialized repertoire of mRNAs and, together with other initiation factors, stimulates binding of mRNA and methionyl-tRNAi to the 40S ribosome. The eIF-3 complex specifically targets and initiates translation of a subset of mRNAs involved in cell proliferation. This Anopheles gambiae (African malaria mosquito) protein is Eukaryotic translation initiation factor 3 subunit E (eIF3-S6).